Consider the following 432-residue polypeptide: NADH-quinone oxidoreductase subunit D (432 aa).

The protein belongs to the complex I 49 kDa subunit family. In terms of assembly, NDH-1 is composed of 14 different subunits. Subunits NuoB, C, D, E, F, and G constitute the peripheral sector of the complex.

It localises to the cell membrane. It catalyses the reaction a quinone + NADH + 5 H(+)(in) = a quinol + NAD(+) + 4 H(+)(out). Functionally, NDH-1 shuttles electrons from NADH, via FMN and iron-sulfur (Fe-S) centers, to quinones in the respiratory chain. The immediate electron acceptor for the enzyme in this species is believed to be a menaquinone. Couples the redox reaction to proton translocation (for every two electrons transferred, four hydrogen ions are translocated across the cytoplasmic membrane), and thus conserves the redox energy in a proton gradient. In Mycobacteroides abscessus (strain ATCC 19977 / DSM 44196 / CCUG 20993 / CIP 104536 / JCM 13569 / NCTC 13031 / TMC 1543 / L948) (Mycobacterium abscessus), this protein is NADH-quinone oxidoreductase subunit D.